The sequence spans 425 residues: Glutamate-1-semialdehyde 2,1-aminomutase (425 aa).

K266 is subject to N6-(pyridoxal phosphate)lysine.

It belongs to the class-III pyridoxal-phosphate-dependent aminotransferase family. HemL subfamily. As to quaternary structure, homodimer. The cofactor is pyridoxal 5'-phosphate.

The protein localises to the cytoplasm. The enzyme catalyses (S)-4-amino-5-oxopentanoate = 5-aminolevulinate. Its pathway is porphyrin-containing compound metabolism; protoporphyrin-IX biosynthesis; 5-aminolevulinate from L-glutamyl-tRNA(Glu): step 2/2. The sequence is that of Glutamate-1-semialdehyde 2,1-aminomutase from Nitratidesulfovibrio vulgaris (strain DSM 19637 / Miyazaki F) (Desulfovibrio vulgaris).